Consider the following 569-residue polypeptide: Proline--tRNA ligase (569 aa).

It belongs to the class-II aminoacyl-tRNA synthetase family. ProS type 1 subfamily. As to quaternary structure, homodimer.

It is found in the cytoplasm. The enzyme catalyses tRNA(Pro) + L-proline + ATP = L-prolyl-tRNA(Pro) + AMP + diphosphate. Catalyzes the attachment of proline to tRNA(Pro) in a two-step reaction: proline is first activated by ATP to form Pro-AMP and then transferred to the acceptor end of tRNA(Pro). As ProRS can inadvertently accommodate and process non-cognate amino acids such as alanine and cysteine, to avoid such errors it has two additional distinct editing activities against alanine. One activity is designated as 'pretransfer' editing and involves the tRNA(Pro)-independent hydrolysis of activated Ala-AMP. The other activity is designated 'posttransfer' editing and involves deacylation of mischarged Ala-tRNA(Pro). The misacylated Cys-tRNA(Pro) is not edited by ProRS. The sequence is that of Proline--tRNA ligase from Shewanella loihica (strain ATCC BAA-1088 / PV-4).